The sequence spans 152 residues: Transcriptional regulator MraZ (152 aa).

SpoVT-AbrB domains follow at residues 5–52 (AQAI…PLKE) and 81–124 (ATEC…SETE).

It belongs to the MraZ family. In terms of assembly, forms oligomers.

The protein resides in the cytoplasm. The protein localises to the nucleoid. In Mannheimia succiniciproducens (strain KCTC 0769BP / MBEL55E), this protein is Transcriptional regulator MraZ.